Consider the following 83-residue polypeptide: Kappa-actitoxin-Aer3a (83 aa).

The signal sequence occupies residues 1–22 (MKGQMIICLVLIALCMSVVVMA). Residues 23 to 49 (QNLRAEELEKANPKDERVRSFERNQKR) constitute a propeptide that is removed on maturation. The ShKT domain maps to 51 to 83 (CKDYLPKSECTQFRCRTSMKYKYTNCKKTCGTC). 3 disulfide bridges follow: C51–C83, C60–C76, and C65–C80.

The protein belongs to the sea anemone type 1 potassium channel toxin family. Type 1a subfamily.

The protein resides in the secreted. It is found in the nematocyst. Specifically, dose-dependently and potently blocks the voltage-gated potassium channel Kv1.1/KCNA1 (Ki=1.6 pM). Moderately blocks potassium channel heterotetramers formed by 3 subunits of Kv1.1/KCNA1 and 1 subunit of Kv1.2/KCNA2 (Ki=56 nM) and weakly blocks those formed by 2 subunits of Kv1.1/KCNA1 and 2 subunits of Kv1.2/KCNA2 (Ki=14 nM). This Anemonia erythraea (Sea anemone) protein is Kappa-actitoxin-Aer3a.